We begin with the raw amino-acid sequence, 122 residues long: uncharacterized protein (122 aa).

Transmembrane regions (helical) follow at residues P43 to I63 and A76 to F96.

It localises to the membrane. This is an uncharacterized protein from Schizosaccharomyces pombe (strain 972 / ATCC 24843) (Fission yeast).